An 80-amino-acid chain; its full sequence is Protein FAM229B (80 aa).

The segment at 1–45 (MPFRFGTQPRRFPVEGGDSSIELESGLSSSASCNGKETSPNRQLR) is disordered. The segment covering 15-32 (EGGDSSIELESGLSSSAS) has biased composition (low complexity). The segment covering 33-42 (CNGKETSPNR) has biased composition (polar residues).

The protein belongs to the FAM229 family.

The protein is Protein FAM229B (Fam229b) of Rattus norvegicus (Rat).